The following is a 741-amino-acid chain: Melanoma-associated antigen D4 (741 aa).

Polar residues predominate over residues 1–13; the sequence is MAEGSFSVQSESY. 4 disordered regions span residues 1–27, 136–206, 247–296, and 323–379; these read MAEG…EVGE, RVAT…EGPS, MAFP…KALA, and PEGA…QPSL. A compositionally biased stretch (acidic residues) spans 14–27; it reads SVEDMDEGSDEVGE. Composition is skewed to polar residues over residues 140-151 and 187-196; these read PQVSGEDTQPTT and TSAQSQTGSP. A compositionally biased stretch (acidic residues) spans 354–363; it reads DEYESSEEER. The MAGE domain occupies 413–611; that stretch reads LQERANKLVK…REWKAHFLEA (199 aa). Positions 700–720 are disordered; sequence VSSGTNGGASTSVLDGPSTSS. Residues 701 to 720 are compositionally biased toward polar residues; that stretch reads SSGTNGGASTSVLDGPSTSS.

In terms of assembly, interacts with TRIM27. In terms of tissue distribution, expressed only in brain and ovary among normal tissues. Isoform 1 and isoform 2 are specifically expressed in glioma cells among cancer cells. Detected in some renal cell carcinoma samples.

Its function is as follows. May enhance ubiquitin ligase activity of RING-type zinc finger-containing E3 ubiquitin-protein ligases. Proposed to act through recruitment and/or stabilization of the Ubl-conjugating enzyme (E2) at the E3:substrate complex. The sequence is that of Melanoma-associated antigen D4 (MAGED4) from Homo sapiens (Human).